The chain runs to 231 residues: Thrombin-like enzyme leucurobin (231 aa).

A Peptidase S1 domain is found at 1–223 (VIGGDECDIN…YLPWIQSIIA (223 aa)). Intrachain disulfides connect Cys7-Cys139, Cys26-Cys42, Cys74-Cys230, Cys118-Cys184, Cys150-Cys163, and Cys174-Cys199. Residues His41 and Asp86 each act as charge relay system in the active site. Asn146 carries N-linked (GlcNAc...) asparagine glycosylation. Ser178 functions as the Charge relay system in the catalytic mechanism. N-linked (GlcNAc...) asparagine glycosylation occurs at Asn225.

This sequence belongs to the peptidase S1 family. Snake venom subfamily. As to quaternary structure, monomer. Post-translationally, glycosylated. Expressed by the venom gland.

It is found in the secreted. The catalysed reaction is Selective cleavage of Arg-|-Xaa bond in fibrinogen, to form fibrin, and release fibrinopeptide A. The specificity of further degradation of fibrinogen varies with species origin of the enzyme.. Inhibited by PMSF and benzamidine. Its clotting effect is strongly inhibited by antibothropic serum. Is not inhibited by heparin. Functionally, thrombin-like snake venom serine protease that cleaves Arg-Gly bonds in alpha-chain of fibrinogen (FGA). Induces temporary episodes of opisthotonos and rapid rolling around the long axis of the animal (gyroxin-like effect), when injected into the tail veins of mice (0.143 ug/g mouse). The polypeptide is Thrombin-like enzyme leucurobin (Bothrops leucurus (Whitetail lancehead)).